A 503-amino-acid polypeptide reads, in one-letter code: Aspartyl/glutamyl-tRNA(Asn/Gln) amidotransferase subunit B (503 aa).

It belongs to the GatB/GatE family. GatB subfamily. Heterotrimer of A, B and C subunits.

The enzyme catalyses L-glutamyl-tRNA(Gln) + L-glutamine + ATP + H2O = L-glutaminyl-tRNA(Gln) + L-glutamate + ADP + phosphate + H(+). It catalyses the reaction L-aspartyl-tRNA(Asn) + L-glutamine + ATP + H2O = L-asparaginyl-tRNA(Asn) + L-glutamate + ADP + phosphate + 2 H(+). In terms of biological role, allows the formation of correctly charged Asn-tRNA(Asn) or Gln-tRNA(Gln) through the transamidation of misacylated Asp-tRNA(Asn) or Glu-tRNA(Gln) in organisms which lack either or both of asparaginyl-tRNA or glutaminyl-tRNA synthetases. The reaction takes place in the presence of glutamine and ATP through an activated phospho-Asp-tRNA(Asn) or phospho-Glu-tRNA(Gln). This chain is Aspartyl/glutamyl-tRNA(Asn/Gln) amidotransferase subunit B, found in Rhodococcus erythropolis (strain PR4 / NBRC 100887).